A 343-amino-acid chain; its full sequence is Methionine import ATP-binding protein MetN (343 aa).

The 240-residue stretch at 2-241 folds into the ABC transporter domain; sequence IKLSNITKVF…PKTPLAQKFI (240 aa). ATP is bound at residue 40–46; that stretch reads SGAGKST. The C2 domain stretch occupies residues 265–343; the sequence is CVPMLRLEFT…HVKVEVLGYV (79 aa). Residues 278–283 and 295–296 each bind L-methionine; these read VDAPLL and NI.

Belongs to the ABC transporter superfamily. Methionine importer (TC 3.A.1.24) family. As to quaternary structure, the complex is composed of two ATP-binding proteins (MetN), two transmembrane proteins (MetI) and a solute-binding protein (MetQ).

The protein resides in the cell inner membrane. It catalyses the reaction L-methionine(out) + ATP + H2O = L-methionine(in) + ADP + phosphate + H(+). The catalysed reaction is D-methionine(out) + ATP + H2O = D-methionine(in) + ADP + phosphate + H(+). Its activity is regulated as follows. ATPase activity is inhibited by intracellular L-methionine. Binding of methionine to the dimerized C-terminal regulatory domain stabilizes an inward-facing, ATPase-inactive conformation of the transporter, and as a consequence, the rate of ATP hydrolysis decreases. ADP is a competitive inhibitor. Part of the ABC transporter complex MetNIQ involved in methionine import. Responsible for energy coupling to the transport system. It has also been shown to be involved in formyl-L-methionine transport. The polypeptide is Methionine import ATP-binding protein MetN (Escherichia coli (strain K12)).